We begin with the raw amino-acid sequence, 51 residues long: Lipid-anchored plasma membrane protein CPP3 (51 aa).

The interval 1-28 (MRHHQNMHYAPQQQPVYVQQPPPRRESG) is disordered.

It belongs to the CYSTM1 family. Palmitoylated near the C-terminus.

The protein localises to the cell membrane. In Saccharomyces cerevisiae (strain ATCC 204508 / S288c) (Baker's yeast), this protein is Lipid-anchored plasma membrane protein CPP3.